Here is a 340-residue protein sequence, read N- to C-terminus: Alcohol dehydrogenase (340 aa).

The Zn(2+) site is built by C40 and H63.

Belongs to the zinc-containing alcohol dehydrogenase family. Requires Zn(2+) as cofactor.

It carries out the reaction a primary alcohol + NAD(+) = an aldehyde + NADH + H(+). It catalyses the reaction a secondary alcohol + NAD(+) = a ketone + NADH + H(+). The sequence is that of Alcohol dehydrogenase (adhA) from Rhizobium meliloti (strain 1021) (Ensifer meliloti).